Consider the following 388-residue polypeptide: Large ribosomal subunit protein uL3B (388 aa).

Residues 1 to 10 (MSHCKFEQPR) show a composition bias toward basic and acidic residues. The disordered stretch occupies residues 1–34 (MSHCKFEQPRHGSLGFLPRKRASRQRGKVKAFPK). Residues 18-31 (PRKRASRQRGKVKA) show a composition bias toward basic residues.

This sequence belongs to the universal ribosomal protein uL3 family. Component of the large ribosomal subunit (LSU). Mature yeast ribosomes consist of a small (40S) and a large (60S) subunit. The 40S small subunit contains 1 molecule of ribosomal RNA (18S rRNA) and at least 33 different proteins. The large 60S subunit contains 3 rRNA molecules (25S, 5.8S and 5S rRNA) and at least 46 different proteins. uL3 forms together with ES39L one of the contact sites for the signal recognition particle that targets ribosomes to the endoplasmic reticulum membrane.

It is found in the cytoplasm. Its function is as follows. Component of the ribosome, a large ribonucleoprotein complex responsible for the synthesis of proteins in the cell. The small ribosomal subunit (SSU) binds messenger RNAs (mRNAs) and translates the encoded message by selecting cognate aminoacyl-transfer RNA (tRNA) molecules. The large subunit (LSU) contains the ribosomal catalytic site termed the peptidyl transferase center (PTC), which catalyzes the formation of peptide bonds, thereby polymerizing the amino acids delivered by tRNAs into a polypeptide chain. The nascent polypeptides leave the ribosome through a tunnel in the LSU and interact with protein factors that function in enzymatic processing, targeting, and the membrane insertion of nascent chains at the exit of the ribosomal tunnel. uL3 plays a role in coordinating processes of accommodating the aminoacyl-tRNA in the PTC. This Schizosaccharomyces pombe (strain 972 / ATCC 24843) (Fission yeast) protein is Large ribosomal subunit protein uL3B (rpl302).